Consider the following 407-residue polypeptide: Tyrosine--tRNA ligase 1 (407 aa).

Residue Tyr-35 coordinates L-tyrosine. A 'HIGH' region motif is present at residues Pro-40–His-49. L-tyrosine-binding residues include Tyr-168 and Gln-172. Residues Lys-228–Thr-232 carry the 'KMSKS' region motif. ATP is bound at residue Lys-231. The S4 RNA-binding domain occupies Ser-340–Ile-406.

This sequence belongs to the class-I aminoacyl-tRNA synthetase family. TyrS type 1 subfamily. Homodimer.

It localises to the cytoplasm. It catalyses the reaction tRNA(Tyr) + L-tyrosine + ATP = L-tyrosyl-tRNA(Tyr) + AMP + diphosphate + H(+). Catalyzes the attachment of tyrosine to tRNA(Tyr) in a two-step reaction: tyrosine is first activated by ATP to form Tyr-AMP and then transferred to the acceptor end of tRNA(Tyr). The chain is Tyrosine--tRNA ligase 1 from Clostridium acetobutylicum (strain ATCC 824 / DSM 792 / JCM 1419 / IAM 19013 / LMG 5710 / NBRC 13948 / NRRL B-527 / VKM B-1787 / 2291 / W).